Reading from the N-terminus, the 407-residue chain is F-box protein SKIP23 (407 aa).

The region spanning 2-50 (VDWSTLPKDLLDLISKSLESSFDLIQFRSVCSSWRSAAEPKSPLPTHHL) is the F-box domain.

In terms of assembly, part of a SCF (ASK-cullin-F-box) protein ligase complex. Interacts with SKP1A/ASK1.

The protein resides in the nucleus. It functions in the pathway protein modification; protein ubiquitination. Functionally, component of SCF(ASK-cullin-F-box) E3 ubiquitin ligase complexes, which may mediate the ubiquitination and subsequent proteasomal degradation of target proteins. The sequence is that of F-box protein SKIP23 (SKIP23) from Arabidopsis thaliana (Mouse-ear cress).